The sequence spans 468 residues: Uronate isomerase (468 aa).

This sequence belongs to the metallo-dependent hydrolases superfamily. Uronate isomerase family.

It catalyses the reaction D-glucuronate = D-fructuronate. It carries out the reaction aldehydo-D-galacturonate = keto-D-tagaturonate. The protein operates within carbohydrate metabolism; pentose and glucuronate interconversion. This chain is Uronate isomerase, found in Phocaeicola vulgatus (strain ATCC 8482 / DSM 1447 / JCM 5826 / CCUG 4940 / NBRC 14291 / NCTC 11154) (Bacteroides vulgatus).